The following is a 547-amino-acid chain: TBCC domain-containing protein 1 (547 aa).

The C-CAP/cofactor C-like domain occupies Pro304 to Leu435.

It belongs to the TBCC family.

It is found in the cytoplasm. It localises to the cytoskeleton. Its subcellular location is the microtubule organizing center. The protein localises to the centrosome. The protein resides in the spindle pole. Its function is as follows. May play a role in the regulation of centrosome and Golgi apparatus positioning. This Xenopus laevis (African clawed frog) protein is TBCC domain-containing protein 1 (tbccd1).